The following is a 986-amino-acid chain: Ephrin type-A receptor 4 (986 aa).

Positions 1 to 19 (MAGVPVGALLPLLVGVCGA) are cleaved as a signal peptide. Topologically, residues 20–547 (VTGSRVYPAN…PIIGDGTNPT (528 aa)) are extracellular. The region spanning 30 to 209 (EVTLLDSRSV…FYKKCPLTVR (180 aa)) is the Eph LBD domain. 3 N-linked (GlcNAc...) asparagine glycosylation sites follow: N235, N340, and N408. Fibronectin type-III domains follow at residues 328–439 (PPSA…TNQA) and 440–537 (APSP…TVPS). A helical membrane pass occupies residues 548–569 (VLLVSVAGSVVLVVILIAAFVI). The Cytoplasmic portion of the chain corresponds to 570–986 (SRRRSKYSKA…QQMHGRMVPV (417 aa)). 2 positions are modified to phosphotyrosine; by autocatalysis: Y596 and Y602. In terms of domain architecture, Protein kinase spans 621 to 882 (IKIEKVIGVG…QIVNMLDKLI (262 aa)). ATP contacts are provided by residues 627–635 (IGVGEFGEV) and K653. D746 functions as the Proton acceptor in the catalytic mechanism. Phosphotyrosine; by autocatalysis is present on residues Y779 and Y928. One can recognise an SAM domain in the interval 911–975 (SAVVSVSDWL…LSSVQAMRSQ (65 aa)). The PDZ-binding motif lies at 984 to 986 (VPV).

Belongs to the protein kinase superfamily. Tyr protein kinase family. Ephrin receptor subfamily. Interacts with the src family kinase, p59-Fyn, through the major phosphorylation site at position Tyr-602. Interacts (via PDZ motif) with SIPA1L1 (via PDZ domain); controls neuronal morphology through regulation of the RAP1 (RAP1A or RAP1B) and RAP2 (RAP2A, RAP2B or RAP2C) GTPases. Expressed at high levels in brain, with expression also detected in the kidney, lung, muscle and thymus.

The protein resides in the cell membrane. It localises to the early endosome. It catalyses the reaction L-tyrosyl-[protein] + ATP = O-phospho-L-tyrosyl-[protein] + ADP + H(+). In terms of biological role, receptor tyrosine kinase which binds membrane-bound ephrin family ligands residing on adjacent cells, leading to contact-dependent bidirectional signaling into neighboring cells. The signaling pathway downstream of the receptor is referred to as forward signaling while the signaling pathway downstream of the ephrin ligand is referred to as reverse signaling. Highly promiscuous, it has the unique property among Eph receptors to bind and to be physiologically activated by both GPI-anchored ephrin-A and transmembrane ephrin-B ligands including EFNA1 and EFNB3. Upon activation by ephrin ligands, modulates cell morphology and integrin-dependent cell adhesion through regulation of the Rac, Rap and Rho GTPases activity. Plays an important role in the development of the nervous system controlling different steps of axonal guidance including the establishment of the corticospinal projections. The sequence is that of Ephrin type-A receptor 4 (EPHA4) from Gallus gallus (Chicken).